Consider the following 513-residue polypeptide: Carboxyethyl-arginine beta-lactam-synthase (513 aa).

Mg(2+)-binding residues include aspartate 253 and aspartate 351.

Belongs to the asparagine synthetase family. As to quaternary structure, homodimer. It depends on Mg(2+) as a cofactor.

It catalyses the reaction N(2)-(2-carboxyethyl)-L-arginine + ATP = deoxyamidinoproclavaminate + AMP + diphosphate + H(+). It participates in antibiotic biosynthesis; clavulanate biosynthesis; clavulanate from D-glyceraldehyde 3-phosphate and L-arginine: step 2/8. The chain is Carboxyethyl-arginine beta-lactam-synthase (bls) from Streptomyces clavuligerus.